Consider the following 390-residue polypeptide: MIRGRAPRTRPSPPPPLLPLLSLSLLLLSPTVRGDCGPPPDIPNARPILGRHSKFAEQSKVAYSCNNGFKQVPDKSNIVVCLENGQWSSHETFCEKSCVAPERLSFASLKKEYLNMNFFPVGTIVEYECRPGFRKQPPLPGKATCLEDLVWSPVAQFCKKKSCPNPKDLDNGHINIPTGILFGSEINFSCNPGYRLVGVSSTFCSVTGNTVDWDDEFPVCTEIHCPEPPKINNGIMRGESDSYTYSQVVTYSCDKGFILVGNASIYCTVSKSDVGQWSSPPPRCIEKSKVPTKKPTINVPSTGTPSTPQKPTTESVPNPGDQPTPQKPSTVKVSATQHVPVTKTTVRHPIRTSTDKGEPNTGGDRYIYGHTCLITLTVLHVMLSLIGYLT.

An N-terminal signal peptide occupies residues 1–34 (MIRGRAPRTRPSPPPPLLPLLSLSLLLLSPTVRG). 4 Sushi domains span residues 35–96 (DCGP…FCEK), 97–160 (SCVA…FCKK), 161–222 (KSCP…VCTE), and 223–286 (IHCP…RCIE). 8 disulfides stabilise this stretch: C36–C81, C65–C94, C98–C145, C129–C158, C163–C204, C190–C220, C225–C267, and C253–C284. The N-linked (GlcNAc...) asparagine glycan is linked to N187. N-linked (GlcNAc...) asparagine glycosylation is present at N262. The interval 273–362 (DVGQWSSPPP…STDKGEPNTG (90 aa)) is disordered. Composition is skewed to polar residues over residues 298-319 (NVPSTGTPSTPQKPTTESVPNP) and 327-344 (KPSTVKVSATQHVPVTKT). The GPI-anchor amidated glycine moiety is linked to residue G362. A propeptide spans 363 to 390 (GDRYIYGHTCLITLTVLHVMLSLIGYLT) (removed in mature form).

Belongs to the receptors of complement activation (RCA) family. Brain, secretory epithelia, skeletal muscle, liver, testes, thymus, spleen and lymph node.

It is found in the cell membrane. This protein recognizes C4b and C3b fragments that condense with cell-surface hydroxyl or amino groups when nascent C4b and C3b are locally generated during C4 and c3 activation. Interaction of daf with cell-associated C4b and C3b polypeptides interferes with their ability to catalyze the conversion of C2 and factor B to enzymatically active C2a and Bb and thereby prevents the formation of C4b2a and C3bBb, the amplification convertases of the complement cascade. Inhibits complement activation by destabilizing and preventing the formation of C3 and C5 convertases, which prevents complement damage. The chain is Complement decay-accelerating factor, GPI-anchored (Cd55) from Mus musculus (Mouse).